A 70-amino-acid chain; its full sequence is ATP synthase subunit c (70 aa).

The next 2 membrane-spanning stretches (helical) occupy residues I4–V24 and F47–V67.

It belongs to the ATPase C chain family. As to quaternary structure, F-type ATPases have 2 components, F(1) - the catalytic core - and F(0) - the membrane proton channel. F(1) has five subunits: alpha(3), beta(3), gamma(1), delta(1), epsilon(1). F(0) has three main subunits: a(1), b(2) and c(10-14). The alpha and beta chains form an alternating ring which encloses part of the gamma chain. F(1) is attached to F(0) by a central stalk formed by the gamma and epsilon chains, while a peripheral stalk is formed by the delta and b chains.

Its subcellular location is the cell membrane. Its function is as follows. F(1)F(0) ATP synthase produces ATP from ADP in the presence of a proton or sodium gradient. F-type ATPases consist of two structural domains, F(1) containing the extramembraneous catalytic core and F(0) containing the membrane proton channel, linked together by a central stalk and a peripheral stalk. During catalysis, ATP synthesis in the catalytic domain of F(1) is coupled via a rotary mechanism of the central stalk subunits to proton translocation. Key component of the F(0) channel; it plays a direct role in translocation across the membrane. A homomeric c-ring of between 10-14 subunits forms the central stalk rotor element with the F(1) delta and epsilon subunits. This chain is ATP synthase subunit c, found in Pediococcus pentosaceus (strain ATCC 25745 / CCUG 21536 / LMG 10740 / 183-1w).